Consider the following 221-residue polypeptide: GTP-binding nuclear protein Ran-B1 (221 aa).

The Small GTPase Ran-type domain maps to 10–174; it reads DYPSFKLVIV…LYLARKLAGD (165 aa). 21-28 provides a ligand contact to GTP; sequence DGGTGKTT. The tract at residues 40–48 is switch-I; the sequence is KKYEPTIGV. GTP contacts are provided by residues Gly-71, 125 to 128, and 153 to 155; these read NKVD and SAK. The tract at residues 71–87 is switch-II; it reads GQEKFGGLRDGYYIHGQ.

This sequence belongs to the small GTPase superfamily. Ran family. Found in a nuclear export complex with RanGTP, exportin and pre-miRNA.

The protein localises to the nucleus. GTP-binding protein involved in nucleocytoplasmic transport. Required for the import of protein into the nucleus and also for RNA export. Involved in chromatin condensation and control of cell cycle. The chain is GTP-binding nuclear protein Ran-B1 (RAN-B1) from Nicotiana tabacum (Common tobacco).